Reading from the N-terminus, the 104-residue chain is Cell division protein FtsB (104 aa).

The Cytoplasmic portion of the chain corresponds to 1 to 3 (MGK). A helical membrane pass occupies residues 4–21 (LTLLLLVLLGWLQYSLWL). Topologically, residues 22-104 (GKNGIHDYTR…NAQQGRPASQ (83 aa)) are periplasmic. The stretch at 33–62 (DEDVASQQGNNAKLKARNDRLFAEIDDLNG) forms a coiled coil.

The protein belongs to the FtsB family. In terms of assembly, part of a complex composed of FtsB, FtsL and FtsQ.

It localises to the cell inner membrane. Functionally, essential cell division protein. May link together the upstream cell division proteins, which are predominantly cytoplasmic, with the downstream cell division proteins, which are predominantly periplasmic. The protein is Cell division protein FtsB of Erwinia tasmaniensis (strain DSM 17950 / CFBP 7177 / CIP 109463 / NCPPB 4357 / Et1/99).